The following is a 413-amino-acid chain: Serine hydroxymethyltransferase (413 aa).

(6S)-5,6,7,8-tetrahydrofolate-binding positions include L119 and 123 to 125 (GHL). Position 228 is an N6-(pyridoxal phosphate)lysine (K228). Residue 351–353 (SPF) coordinates (6S)-5,6,7,8-tetrahydrofolate.

The protein belongs to the SHMT family. Homodimer. The cofactor is pyridoxal 5'-phosphate.

Its subcellular location is the cytoplasm. The enzyme catalyses (6R)-5,10-methylene-5,6,7,8-tetrahydrofolate + glycine + H2O = (6S)-5,6,7,8-tetrahydrofolate + L-serine. The protein operates within one-carbon metabolism; tetrahydrofolate interconversion. Its pathway is amino-acid biosynthesis; glycine biosynthesis; glycine from L-serine: step 1/1. Functionally, catalyzes the reversible interconversion of serine and glycine with tetrahydrofolate (THF) serving as the one-carbon carrier. This reaction serves as the major source of one-carbon groups required for the biosynthesis of purines, thymidylate, methionine, and other important biomolecules. Also exhibits THF-independent aldolase activity toward beta-hydroxyamino acids, producing glycine and aldehydes, via a retro-aldol mechanism. The sequence is that of Serine hydroxymethyltransferase from Clostridium botulinum (strain ATCC 19397 / Type A).